The sequence spans 406 residues: Argininosuccinate synthase (406 aa).

Residues 12–20 (AYSGGLDTS) and alanine 40 contribute to the ATP site. Tyrosine 92 and serine 97 together coordinate L-citrulline. Glycine 122 contributes to the ATP binding site. L-aspartate contacts are provided by threonine 124, asparagine 128, and aspartate 129. Asparagine 128 is an L-citrulline binding site. Arginine 132, serine 181, serine 190, glutamate 266, and tyrosine 278 together coordinate L-citrulline.

Belongs to the argininosuccinate synthase family. Type 1 subfamily. Homotetramer.

Its subcellular location is the cytoplasm. It catalyses the reaction L-citrulline + L-aspartate + ATP = 2-(N(omega)-L-arginino)succinate + AMP + diphosphate + H(+). It participates in amino-acid biosynthesis; L-arginine biosynthesis; L-arginine from L-ornithine and carbamoyl phosphate: step 2/3. The polypeptide is Argininosuccinate synthase (Serratia proteamaculans (strain 568)).